A 262-amino-acid polypeptide reads, in one-letter code: Type III pantothenate kinase (262 aa).

Residue 9–16 coordinates ATP; it reads DSGNTRVK. Substrate-binding positions include Y93 and 100 to 103; that span reads GSDR. D102 (proton acceptor) is an active-site residue. D122 lines the K(+) pocket. T125 contacts ATP. T175 provides a ligand contact to substrate.

This sequence belongs to the type III pantothenate kinase family. As to quaternary structure, homodimer. It depends on NH4(+) as a cofactor. K(+) serves as cofactor.

Its subcellular location is the cytoplasm. The catalysed reaction is (R)-pantothenate + ATP = (R)-4'-phosphopantothenate + ADP + H(+). It functions in the pathway cofactor biosynthesis; coenzyme A biosynthesis; CoA from (R)-pantothenate: step 1/5. In terms of biological role, catalyzes the phosphorylation of pantothenate (Pan), the first step in CoA biosynthesis. The chain is Type III pantothenate kinase from Nitrosospira multiformis (strain ATCC 25196 / NCIMB 11849 / C 71).